The sequence spans 302 residues: tRNA pseudouridine synthase B (302 aa).

His-40 contacts substrate. The Nucleophile role is filled by Asp-45. Residues Tyr-73, Tyr-178, and Leu-199 each contribute to the substrate site.

The protein belongs to the pseudouridine synthase TruB family. Type 1 subfamily.

The catalysed reaction is uridine(55) in tRNA = pseudouridine(55) in tRNA. Functionally, responsible for synthesis of pseudouridine from uracil-55 in the psi GC loop of transfer RNAs. This is tRNA pseudouridine synthase B from Buchnera aphidicola subsp. Baizongia pistaciae (strain Bp).